The sequence spans 702 residues: Phosphoglycerol transferase I (702 aa).

A run of 3 helical transmembrane segments spans residues 3–25 (WILALSLLLLLLLLVASPRLAWL), 73–95 (GYIAVFIGMVLLSLSPLVLLRVR), and 102–124 (GGGAVFGAFVVMLLVSVAVSPLY).

Belongs to the OpgB family.

It is found in the cell inner membrane. It catalyses the reaction a phosphatidylglycerol + a membrane-derived-oligosaccharide D-glucose = a 1,2-diacyl-sn-glycerol + a membrane-derived-oligosaccharide 6-(glycerophospho)-D-glucose.. It functions in the pathway glycan metabolism; osmoregulated periplasmic glucan (OPG) biosynthesis. Its function is as follows. Transfers a phosphoglycerol residue from phosphatidylglycerol to the membrane-bound nascent glucan backbones. The chain is Phosphoglycerol transferase I from Xanthomonas campestris pv. campestris (strain ATCC 33913 / DSM 3586 / NCPPB 528 / LMG 568 / P 25).